Consider the following 61-residue polypeptide: Small ribosomal subunit protein uS14 (61 aa).

Residues Cys-24, Cys-27, Cys-40, and Cys-43 each contribute to the Zn(2+) site.

Belongs to the universal ribosomal protein uS14 family. Zinc-binding uS14 subfamily. As to quaternary structure, part of the 30S ribosomal subunit. Contacts proteins S3 and S10. Requires Zn(2+) as cofactor.

Its function is as follows. Binds 16S rRNA, required for the assembly of 30S particles and may also be responsible for determining the conformation of the 16S rRNA at the A site. The sequence is that of Small ribosomal subunit protein uS14 from Lachnospira eligens (strain ATCC 27750 / DSM 3376 / VPI C15-48 / C15-B4) (Eubacterium eligens).